We begin with the raw amino-acid sequence, 205 residues long: Outer-membrane lipoprotein LolB (205 aa).

The first 17 residues, 1–17 (MRLRLFLAASALALLSG), serve as a signal peptide directing secretion. C18 carries the N-palmitoyl cysteine lipid modification. C18 carries the S-diacylglycerol cysteine lipid modification.

The protein belongs to the LolB family. Monomer.

It is found in the cell outer membrane. Functionally, plays a critical role in the incorporation of lipoproteins in the outer membrane after they are released by the LolA protein. The polypeptide is Outer-membrane lipoprotein LolB (Pseudomonas paraeruginosa (strain DSM 24068 / PA7) (Pseudomonas aeruginosa (strain PA7))).